Reading from the N-terminus, the 96-residue chain is Small ribosomal subunit protein bS6 (96 aa).

Belongs to the bacterial ribosomal protein bS6 family.

Binds together with bS18 to 16S ribosomal RNA. The sequence is that of Small ribosomal subunit protein bS6 from Streptococcus uberis (strain ATCC BAA-854 / 0140J).